The sequence spans 333 residues: MKNLRNRSFLTLLDFSRQEVEFLLTLSEDLKRAKYIGTEKPMLKNKNIALLFEKDSTRTRCAFEVAAHDQGANVTYLGPTGSQMGKKETTKDTARVLGGMYDGIEYRGFSQRTVETLAEYSGVPVWNGLTDEDHPTQVLADFLTAKEVLKKDYADINFTYVGDGRNNVANALMQGAAIMGMNFHLVCPKELNPTDELLNRCKNIAAENGGNILITDNIDQGVKGSDVIYTDVWVSMGEPDEVWKERLELLKPYQVNKEMMDKTGNPNVIFEHCLPSFHNADTKIGQQIFEKYGIREMEVTDEVFESKASVVFQEAENRMHTIKAVMVATLGEF.

Carbamoyl phosphate contacts are provided by residues 56 to 59 (STRT), glutamine 83, arginine 107, and 134 to 137 (HPTQ). Residues asparagine 167, aspartate 231, and 235-236 (SM) each bind L-ornithine. Residues 273–274 (CL) and arginine 318 contribute to the carbamoyl phosphate site.

This sequence belongs to the aspartate/ornithine carbamoyltransferase superfamily. OTCase family.

Its subcellular location is the cytoplasm. The enzyme catalyses carbamoyl phosphate + L-ornithine = L-citrulline + phosphate + H(+). It participates in amino-acid biosynthesis; L-arginine biosynthesis; L-arginine from L-ornithine and carbamoyl phosphate: step 1/3. In terms of biological role, reversibly catalyzes the transfer of the carbamoyl group from carbamoyl phosphate (CP) to the N(epsilon) atom of ornithine (ORN) to produce L-citrulline. The chain is Ornithine carbamoyltransferase from Staphylococcus aureus (strain MSSA476).